A 193-amino-acid chain; its full sequence is MTALRLIVGLGNPGPEHAQTRHNAGFRFVDALIERSGARWALDSKLFGETAKVEVAGQPVWLLKPATFMNLSGKSITAALRFWKIEPEHLLVAHDELDLAPGTARLKFDGGHGGQNGLRDTIRLLGHGKFHRLRVGIGHPGHKDRVVPWVLGRAGREDDAAIGAAVDAAIDVLPLAMEGNFNEAMKRLHTEKK.

His-17 lines the tRNA pocket. The active-site Proton acceptor is the His-22. Positions 68, 70, and 116 each coordinate tRNA.

It belongs to the PTH family. As to quaternary structure, monomer.

It localises to the cytoplasm. It catalyses the reaction an N-acyl-L-alpha-aminoacyl-tRNA + H2O = an N-acyl-L-amino acid + a tRNA + H(+). Functionally, hydrolyzes ribosome-free peptidyl-tRNAs (with 1 or more amino acids incorporated), which drop off the ribosome during protein synthesis, or as a result of ribosome stalling. In terms of biological role, catalyzes the release of premature peptidyl moieties from peptidyl-tRNA molecules trapped in stalled 50S ribosomal subunits, and thus maintains levels of free tRNAs and 50S ribosomes. The protein is Peptidyl-tRNA hydrolase of Xanthomonas axonopodis pv. citri (strain 306).